We begin with the raw amino-acid sequence, 776 residues long: Protein translocase subunit SecA 2 (776 aa).

Residues Gln-80, Gly-98–Thr-102, and Asp-486 each bind ATP.

It belongs to the SecA family. In terms of assembly, monomer and homodimer. Part of the essential Sec protein translocation apparatus which comprises SecA, SecYEG and auxiliary proteins SecDF. Other proteins may also be involved.

It is found in the cell membrane. The protein localises to the cytoplasm. It carries out the reaction ATP + H2O + cellular proteinSide 1 = ADP + phosphate + cellular proteinSide 2.. Its function is as follows. Part of the Sec protein translocase complex. Interacts with the SecYEG preprotein conducting channel. Has a central role in coupling the hydrolysis of ATP to the transfer of proteins into and across the cell membrane, serving as an ATP-driven molecular motor driving the stepwise translocation of polypeptide chains across the membrane. This Listeria innocua serovar 6a (strain ATCC BAA-680 / CLIP 11262) protein is Protein translocase subunit SecA 2.